The sequence spans 128 residues: Small ribosomal subunit protein uS11 (128 aa).

This sequence belongs to the universal ribosomal protein uS11 family. Part of the 30S ribosomal subunit. Interacts with proteins S7 and S18. Binds to IF-3.

In terms of biological role, located on the platform of the 30S subunit, it bridges several disparate RNA helices of the 16S rRNA. Forms part of the Shine-Dalgarno cleft in the 70S ribosome. In Synechococcus sp. (strain JA-3-3Ab) (Cyanobacteria bacterium Yellowstone A-Prime), this protein is Small ribosomal subunit protein uS11.